The chain runs to 483 residues: ATP synthase subunit beta (483 aa).

An ATP-binding site is contributed by 169–176 (GGAGVGKT).

The protein belongs to the ATPase alpha/beta chains family. In terms of assembly, F-type ATPases have 2 components, CF(1) - the catalytic core - and CF(0) - the membrane proton channel. CF(1) has five subunits: alpha(3), beta(3), gamma(1), delta(1), epsilon(1). CF(0) has three main subunits: a(1), b(2) and c(9-12). The alpha and beta chains form an alternating ring which encloses part of the gamma chain. CF(1) is attached to CF(0) by a central stalk formed by the gamma and epsilon chains, while a peripheral stalk is formed by the delta and b chains.

Its subcellular location is the cell membrane. It catalyses the reaction ATP + H2O + 4 H(+)(in) = ADP + phosphate + 5 H(+)(out). Functionally, produces ATP from ADP in the presence of a proton gradient across the membrane. The catalytic sites are hosted primarily by the beta subunits. The sequence is that of ATP synthase subunit beta from Corynebacterium glutamicum (strain ATCC 13032 / DSM 20300 / JCM 1318 / BCRC 11384 / CCUG 27702 / LMG 3730 / NBRC 12168 / NCIMB 10025 / NRRL B-2784 / 534).